The following is a 324-amino-acid chain: Bis(5'-nucleosyl)-tetraphosphatase, symmetrical (324 aa).

A disordered region spans residues 269 to 324 (PGREVTAPATAPRAPRRPRERQGRQRARGGRGGGNGNGNGGNAAAPAAAPGDAPQE). The segment covering 282–297 (APRRPRERQGRQRARG) has biased composition (basic residues). Residues 298–309 (GRGGGNGNGNGG) show a composition bias toward gly residues. A compositionally biased stretch (low complexity) spans 310–324 (NAAAPAAAPGDAPQE).

It belongs to the Ap4A hydrolase family.

It catalyses the reaction P(1),P(4)-bis(5'-adenosyl) tetraphosphate + H2O = 2 ADP + 2 H(+). Its function is as follows. Hydrolyzes diadenosine 5',5'''-P1,P4-tetraphosphate to yield ADP. The protein is Bis(5'-nucleosyl)-tetraphosphatase, symmetrical of Xanthomonas campestris pv. campestris (strain ATCC 33913 / DSM 3586 / NCPPB 528 / LMG 568 / P 25).